We begin with the raw amino-acid sequence, 385 residues long: Serine/threonine-protein kinase SBK1 (385 aa).

The Protein kinase domain maps to 32–297 (YEVIRELGKG…VFAHLGHRWM (266 aa)). ATP contacts are provided by residues 38–46 (LGKGTYGKV) and K61. D153 serves as the catalytic Proton acceptor. A compositionally biased stretch (polar residues) spans 328-338 (TLSPTANTSNA). Residues 328–374 (TLSPTANTSNAIEPGSANHFTSMSTNSSVSSTNSYERSARDSPPTSR) form a disordered region. Positions 348–361 (TSMSTNSSVSSTNS) are enriched in low complexity.

It belongs to the protein kinase superfamily. Ser/Thr protein kinase family. Mainly expressed in brain.

It localises to the cytoplasm. The enzyme catalyses L-seryl-[protein] + ATP = O-phospho-L-seryl-[protein] + ADP + H(+). The catalysed reaction is L-threonyl-[protein] + ATP = O-phospho-L-threonyl-[protein] + ADP + H(+). Its function is as follows. May be involved in the control of neuronal proliferation or migration in the brain of embryos. The sequence is that of Serine/threonine-protein kinase SBK1 (sbk1) from Danio rerio (Zebrafish).